The sequence spans 375 residues: 23S rRNA (uracil(747)-C(5))-methyltransferase RlmC (375 aa).

Positions 3, 11, 14, and 87 each coordinate [4Fe-4S] cluster. S-adenosyl-L-methionine contacts are provided by Gln-212, Phe-241, Glu-262, and Asn-307. The active-site Nucleophile is Cys-334.

This sequence belongs to the class I-like SAM-binding methyltransferase superfamily. RNA M5U methyltransferase family. RlmC subfamily.

It catalyses the reaction uridine(747) in 23S rRNA + S-adenosyl-L-methionine = 5-methyluridine(747) in 23S rRNA + S-adenosyl-L-homocysteine + H(+). Its function is as follows. Catalyzes the formation of 5-methyl-uridine at position 747 (m5U747) in 23S rRNA. The protein is 23S rRNA (uracil(747)-C(5))-methyltransferase RlmC of Salmonella dublin (strain CT_02021853).